The sequence spans 251 residues: Triosephosphate isomerase (251 aa).

Position 9–11 (9–11 (NWK)) interacts with substrate. Residue H95 is the Electrophile of the active site. E167 functions as the Proton acceptor in the catalytic mechanism. Substrate-binding positions include G173, S212, and 233-234 (GG).

This sequence belongs to the triosephosphate isomerase family. In terms of assembly, homodimer.

The protein localises to the cytoplasm. It carries out the reaction D-glyceraldehyde 3-phosphate = dihydroxyacetone phosphate. Its pathway is carbohydrate biosynthesis; gluconeogenesis. The protein operates within carbohydrate degradation; glycolysis; D-glyceraldehyde 3-phosphate from glycerone phosphate: step 1/1. Involved in the gluconeogenesis. Catalyzes stereospecifically the conversion of dihydroxyacetone phosphate (DHAP) to D-glyceraldehyde-3-phosphate (G3P). This is Triosephosphate isomerase from Ectopseudomonas mendocina (strain ymp) (Pseudomonas mendocina).